The following is a 386-amino-acid chain: Succinate--CoA ligase [ADP-forming] subunit beta (386 aa).

An ATP-grasp domain is found at 9–244 (KELLKQFGVP…LDEEDPAEIE (236 aa)). ATP-binding positions include Lys46, 53–55 (GRG), Glu99, Ala102, and Glu107. Mg(2+) contacts are provided by Asn199 and Asp213. Substrate contacts are provided by residues Asn264 and 321 to 323 (GIM).

It belongs to the succinate/malate CoA ligase beta subunit family. Heterotetramer of two alpha and two beta subunits. Mg(2+) serves as cofactor.

It carries out the reaction succinate + ATP + CoA = succinyl-CoA + ADP + phosphate. The catalysed reaction is GTP + succinate + CoA = succinyl-CoA + GDP + phosphate. Its pathway is carbohydrate metabolism; tricarboxylic acid cycle; succinate from succinyl-CoA (ligase route): step 1/1. Succinyl-CoA synthetase functions in the citric acid cycle (TCA), coupling the hydrolysis of succinyl-CoA to the synthesis of either ATP or GTP and thus represents the only step of substrate-level phosphorylation in the TCA. The beta subunit provides nucleotide specificity of the enzyme and binds the substrate succinate, while the binding sites for coenzyme A and phosphate are found in the alpha subunit. The sequence is that of Succinate--CoA ligase [ADP-forming] subunit beta from Bordetella petrii (strain ATCC BAA-461 / DSM 12804 / CCUG 43448).